Here is a 498-residue protein sequence, read N- to C-terminus: ATP synthase subunit beta, chloroplastic (498 aa).

172 to 179 provides a ligand contact to ATP; sequence GGAGVGKT.

Belongs to the ATPase alpha/beta chains family. As to quaternary structure, F-type ATPases have 2 components, CF(1) - the catalytic core - and CF(0) - the membrane proton channel. CF(1) has five subunits: alpha(3), beta(3), gamma(1), delta(1), epsilon(1). CF(0) has four main subunits: a(1), b(1), b'(1) and c(9-12).

Its subcellular location is the plastid. The protein resides in the chloroplast thylakoid membrane. The enzyme catalyses ATP + H2O + 4 H(+)(in) = ADP + phosphate + 5 H(+)(out). Functionally, produces ATP from ADP in the presence of a proton gradient across the membrane. The catalytic sites are hosted primarily by the beta subunits. The chain is ATP synthase subunit beta, chloroplastic from Nymphaea alba (White water-lily).